A 227-amino-acid polypeptide reads, in one-letter code: Chloronitrobenzene nitroreductase (227 aa).

Position 14 to 18 (arginine 14 to arginine 18) interacts with FMN. Serine 44 lines the NADP(+) pocket. Residues glycine 172–leucine 173 and arginine 215 each bind FMN.

The protein belongs to the nitroreductase family. FMN serves as cofactor.

It carries out the reaction N-phenylhydroxylamine + 2 NADP(+) + H2O = nitrobenzene + 2 NADPH + 2 H(+). It participates in xenobiotic degradation; nitrobenzene degradation. It functions in the pathway xenobiotic degradation; 4-chloronitrobenzene degradation. Functionally, involved in the biodegradation of chlorinated nitroaromatic compounds. Catalyzes the reduction of 4-chloronitrobenzene to yield 1-hydroxylamino-4-chlorobenzene. Probably also able to catalyze the two-electron reduction of nitrobenzene (NB) to produce a nitrosobenzene (NOB) intermediate, which is immediately reduced to hydroxylaminobenzene (HAB) by a second two-electron transfer. This chain is Chloronitrobenzene nitroreductase, found in Comamonas testosteroni (Pseudomonas testosteroni).